The primary structure comprises 533 residues: Peptide chain release factor 3 (533 aa).

In terms of domain architecture, tr-type G spans 9-284; the sequence is ARRRTFAIIS…ALCELSPPPL (276 aa). GTP contacts are provided by residues 18-25, 95-99, and 149-152; these read SHPDAGKT, DTPGH, and NKLD.

The protein belongs to the TRAFAC class translation factor GTPase superfamily. Classic translation factor GTPase family. PrfC subfamily.

Its subcellular location is the cytoplasm. In terms of biological role, increases the formation of ribosomal termination complexes and stimulates activities of RF-1 and RF-2. It binds guanine nucleotides and has strong preference for UGA stop codons. It may interact directly with the ribosome. The stimulation of RF-1 and RF-2 is significantly reduced by GTP and GDP, but not by GMP. This Cupriavidus necator (strain ATCC 17699 / DSM 428 / KCTC 22496 / NCIMB 10442 / H16 / Stanier 337) (Ralstonia eutropha) protein is Peptide chain release factor 3.